A 216-amino-acid polypeptide reads, in one-letter code: SYKVSGGLHGVGVSVVNALSKKLHLTIHRAGQIHEQEYAHGDPQYPLKVVGETDTSGTTVRFWPSELTFSQTIFSVDILARRLRELSFLNAGVRIVLRDERVNLEHIYDYEVGLSEKSALDIAGLPGKLADCQEKDPALSELYLVEGDSAGGSAKQGRNRKMQAILPLKGKILNVERARFDKMISSQEVGTLITALGCGIGREEYNPDKLRYHKII.

The Toprim domain maps to 140 to 216 (SELYLVEGDS…PDKLRYHKII (77 aa)).

This sequence belongs to the type II topoisomerase GyrB family. Heterotetramer, composed of two GyrA and two GyrB chains. In the heterotetramer, GyrA contains the active site tyrosine that forms a transient covalent intermediate with DNA, while GyrB binds cofactors and catalyzes ATP hydrolysis.

Its subcellular location is the cytoplasm. It catalyses the reaction ATP-dependent breakage, passage and rejoining of double-stranded DNA.. In terms of biological role, a type II topoisomerase that negatively supercoils closed circular double-stranded (ds) DNA in an ATP-dependent manner to modulate DNA topology and maintain chromosomes in an underwound state. Negative supercoiling favors strand separation, and DNA replication, transcription, recombination and repair, all of which involve strand separation. Also able to catalyze the interconversion of other topological isomers of dsDNA rings, including catenanes and knotted rings. Type II topoisomerases break and join 2 DNA strands simultaneously in an ATP-dependent manner. The sequence is that of DNA gyrase subunit B (gyrB) from Acinetobacter venetianus (strain ATCC 31012 / DSM 23050 / BCRC 14357 / CCUG 45561 / CIP 110063 / KCTC 2702 / LMG 19082 / RAG-1).